The chain runs to 209 residues: Large ribosomal subunit protein uL3 (209 aa).

N5-methylglutamine is present on Gln150.

Belongs to the universal ribosomal protein uL3 family. Part of the 50S ribosomal subunit. Forms a cluster with proteins L14 and L19. Post-translationally, methylated by PrmB.

Its function is as follows. One of the primary rRNA binding proteins, it binds directly near the 3'-end of the 23S rRNA, where it nucleates assembly of the 50S subunit. The sequence is that of Large ribosomal subunit protein uL3 from Klebsiella pneumoniae (strain 342).